A 352-amino-acid chain; its full sequence is Adenosine deaminase (352 aa).

N-acetylalanine is present on A2. H15 and H17 together coordinate Zn(2+). Substrate-binding residues include H17 and D19. Position 54 is an N6-acetyllysine (K54). G184 is a substrate binding site. Position 214 (H214) interacts with Zn(2+). The Proton donor role is filled by E217. Residue K232 is modified to N6-acetyllysine. A Zn(2+)-binding site is contributed by D295. Residue D296 coordinates substrate.

It belongs to the metallo-dependent hydrolases superfamily. Adenosine and AMP deaminases family. As to quaternary structure, interacts with DPP4 (via extracellular domain). Interacts with PLG (via Kringle 4 domain); the interaction stimulates PLG activation when in complex with DPP4. The cofactor is Zn(2+). Detected in brain and liver (at protein level).

The protein localises to the cell membrane. Its subcellular location is the cell junction. It is found in the cytoplasmic vesicle lumen. The protein resides in the cytoplasm. It localises to the lysosome. The catalysed reaction is adenosine + H2O + H(+) = inosine + NH4(+). It carries out the reaction 2'-deoxyadenosine + H2O + H(+) = 2'-deoxyinosine + NH4(+). It catalyses the reaction cordycepin + H2O + H(+) = 3'-deoxyinosine + NH4(+). In terms of biological role, catalyzes the hydrolytic deamination of adenosine and 2-deoxyadenosine. Plays an important role in purine metabolism and in adenosine homeostasis. Modulates signaling by extracellular adenosine, and so contributes indirectly to cellular signaling events. Acts as a positive regulator of T-cell coactivation, by binding DPP4. Its interaction with DPP4 regulates lymphocyte-epithelial cell adhesion. Enhances dendritic cell immunogenicity by affecting dendritic cell costimulatory molecule expression and cytokines and chemokines secretion. Enhances CD4+ T-cell differentiation and proliferation. Acts as a positive modulator of adenosine receptors ADORA1 and ADORA2A, by enhancing their ligand affinity via conformational change. Stimulates plasminogen activation. Plays a role in male fertility. Plays a protective role in early postimplantation embryonic development. Also responsible for the deamination of cordycepin (3'-deoxyadenosine), a fungal natural product that shows antitumor, antibacterial, antifungal, antivirus, and immune regulation properties. The sequence is that of Adenosine deaminase (Ada) from Rattus norvegicus (Rat).